The chain runs to 400 residues: Probable tRNA pseudouridine synthase D (400 aa).

Catalysis depends on D89, which acts as the Nucleophile. Residues 162–357 form the TRUD domain; it reads GVPNYYGLQR…AGGDRKPALL (196 aa).

The protein belongs to the pseudouridine synthase TruD family.

The enzyme catalyses uridine(13) in tRNA = pseudouridine(13) in tRNA. Could be responsible for synthesis of pseudouridine from uracil-13 in transfer RNAs. The polypeptide is Probable tRNA pseudouridine synthase D (Methanopyrus kandleri (strain AV19 / DSM 6324 / JCM 9639 / NBRC 100938)).